The primary structure comprises 210 residues: MAEYSQTGILTALLLFTVVTVKDIYVGRNSVTQQENTGPDINTQRQNKHTFYTGPVLKFQYCISUGYSKVFQEYSRSISQLYPDIRIEGDNYPPKPINKYLGNFLSYFKLLAIALIVTGQNPFQMFGMNTPRIWAWGQENKIFSCLMAFFISNMLETHFLSTGAFEITLNDIPIWSKLQSGYVPNIQELFQILDNHLKMNQADKMNFPSP.

An N-terminal signal peptide occupies residues Met1 to Val21. The segment at residues Cys62–Sec65 is a cross-link (cysteinyl-selenocysteine (Cys-Sec)). Sec65 is a non-standard amino acid (selenocysteine).

Belongs to the SelWTH family. Selenoprotein T subfamily. In terms of processing, may contain a selenide-sulfide bond between Cys-62 and Sec-65. This bond is speculated to serve as redox-active pair. As to expression, widely expressed in the embryo.

This Danio rerio (Zebrafish) protein is Selenoprotein T2.